Here is a 111-residue protein sequence, read N- to C-terminus: Cryptic phage CTXphi transcriptional repressor RstR (111 aa).

The HTH cro/C1-type domain maps to 6 to 60; the sequence is IRDLRVERDLNQEEVANGIGVGKNTYLAYEKGTQSPKLETVEKLAKFYGVPIAEL. The H-T-H motif DNA-binding region spans 17-36; it reads QEEVANGIGVGKNTYLAYEK.

Its function is as follows. Transcriptional repressor of the integrated CTXPhi phage gene rstA2. The chain is Cryptic phage CTXphi transcriptional repressor RstR (rstR) from Vibrio cholerae.